A 237-amino-acid chain; its full sequence is Carboxy-S-adenosyl-L-methionine synthase (237 aa).

Residues Tyr40, 65-67 (GCS), 116-117 (DI), Asn131, and Arg194 contribute to the S-adenosyl-L-methionine site.

Belongs to the class I-like SAM-binding methyltransferase superfamily. Cx-SAM synthase family. Homodimer.

The enzyme catalyses prephenate + S-adenosyl-L-methionine = carboxy-S-adenosyl-L-methionine + 3-phenylpyruvate + H2O. Catalyzes the conversion of S-adenosyl-L-methionine (SAM) to carboxy-S-adenosyl-L-methionine (Cx-SAM). The chain is Carboxy-S-adenosyl-L-methionine synthase from Dichelobacter nodosus (strain VCS1703A).